The chain runs to 210 residues: Peptidyl-tRNA hydrolase (210 aa).

Residue Tyr-30 coordinates tRNA. The active-site Proton acceptor is the His-35. 3 residues coordinate tRNA: Tyr-81, Asn-83, and Asn-129.

This sequence belongs to the PTH family. In terms of assembly, monomer.

It is found in the cytoplasm. It carries out the reaction an N-acyl-L-alpha-aminoacyl-tRNA + H2O = an N-acyl-L-amino acid + a tRNA + H(+). Functionally, hydrolyzes ribosome-free peptidyl-tRNAs (with 1 or more amino acids incorporated), which drop off the ribosome during protein synthesis, or as a result of ribosome stalling. In terms of biological role, catalyzes the release of premature peptidyl moieties from peptidyl-tRNA molecules trapped in stalled 50S ribosomal subunits, and thus maintains levels of free tRNAs and 50S ribosomes. The protein is Peptidyl-tRNA hydrolase of Bordetella petrii (strain ATCC BAA-461 / DSM 12804 / CCUG 43448).